Reading from the N-terminus, the 432-residue chain is Adenylosuccinate synthetase (432 aa).

GTP contacts are provided by residues 13–19 (GDEGKGK) and 41–43 (GHT). Catalysis depends on aspartate 14, which acts as the Proton acceptor. 2 residues coordinate Mg(2+): aspartate 14 and glycine 41. IMP contacts are provided by residues 14-17 (DEGK), 39-42 (NAGH), threonine 130, arginine 144, glutamine 225, threonine 240, and arginine 304. The Proton donor role is filled by histidine 42. 300 to 306 (ATTGRSR) is a substrate binding site. Residues arginine 306, 332–334 (KLD), and 415–417 (STG) contribute to the GTP site.

The protein belongs to the adenylosuccinate synthetase family. Homodimer. It depends on Mg(2+) as a cofactor.

It is found in the cytoplasm. It catalyses the reaction IMP + L-aspartate + GTP = N(6)-(1,2-dicarboxyethyl)-AMP + GDP + phosphate + 2 H(+). It functions in the pathway purine metabolism; AMP biosynthesis via de novo pathway; AMP from IMP: step 1/2. Its function is as follows. Plays an important role in the de novo pathway of purine nucleotide biosynthesis. Catalyzes the first committed step in the biosynthesis of AMP from IMP. This chain is Adenylosuccinate synthetase, found in Yersinia enterocolitica serotype O:8 / biotype 1B (strain NCTC 13174 / 8081).